Consider the following 476-residue polypeptide: Ankyrin repeat, SAM and basic leucine zipper domain-containing protein 1 (476 aa).

Phosphoserine is present on residues Ser18 and Ser21. 6 ANK repeats span residues 46–75 (EKNE…SIDS), 79–108 (YGWT…NASF), 111–145 (DKQT…DPNV), 149–178 (RLMT…EVNT), 182–211 (NGYT…DKML), and 215–244 (DGKT…PLEG). The SAM domain occupies 273–335 (SYAAFEDLEI…KILAALKELE (63 aa)).

Interacts with DDX4, PIWIL1, RANBP9 and TDRD1.

It is found in the cytoplasm. Its function is as follows. Plays a central role during spermatogenesis by repressing transposable elements and preventing their mobilization, which is essential for the germline integrity. Acts via the piRNA metabolic process, which mediates the repression of transposable elements during meiosis by forming complexes composed of piRNAs and Piwi proteins and governs the methylation and subsequent repression of transposons. Its association with pi-bodies suggests a participation in the primary piRNAs metabolic process. Required prior to the pachytene stage to facilitate the production of multiple types of piRNAs, including those associated with repeats involved in the regulation of retrotransposons. May act by mediating protein-protein interactions during germ cell maturation. This is Ankyrin repeat, SAM and basic leucine zipper domain-containing protein 1 (ASZ1) from Dasypus novemcinctus (Nine-banded armadillo).